Reading from the N-terminus, the 163-residue chain is Cytosolic iron-sulfur assembly component 2B (163 aa).

This sequence belongs to the MIP18 family. In terms of assembly, component of the CIA complex. Component of the MMXD complex, which includes CIAO1, ERCC2, CIAO2B, MMS19 and SLC25A5. Interacts with CIAO1, ERCC2 and MMS19; the interactions are direct. Interacts with KIF4A; the interaction facilitates the transfer of Fe-S clusters to KIF4A to ensure proper localization of KIF4A to the mitotic machinery. Interacts with CCDC117; the interaction is direct.

The protein localises to the nucleus. Its subcellular location is the cytoplasm. The protein resides in the cytoskeleton. It is found in the spindle. In terms of biological role, component of the cytosolic iron-sulfur protein assembly (CIA) complex, a multiprotein complex that mediates the incorporation of iron-sulfur cluster into extramitochondrial Fe/S proteins. As a CIA complex component and in collaboration with CIAO1 and MMS19, binds to and facilitates the assembly of most cytosolic-nuclear Fe/S proteins. As part of the mitotic spindle-associated MMXD complex it plays a role in chromosome segregation, probably by facilitating iron-sulfur cluster assembly into ERCC2/XPD. Together with MMS19, facilitates the transfer of Fe-S clusters to the motor protein KIF4A, which ensures proper localization of KIF4A to mitotic machinery components to promote the progression of mitosis. This Mus musculus (Mouse) protein is Cytosolic iron-sulfur assembly component 2B.